The primary structure comprises 116 residues: Large ribosomal subunit protein bL19 (116 aa).

The protein belongs to the bacterial ribosomal protein bL19 family.

This protein is located at the 30S-50S ribosomal subunit interface and may play a role in the structure and function of the aminoacyl-tRNA binding site. This is Large ribosomal subunit protein bL19 from Pseudomonas fluorescens (strain Pf0-1).